Reading from the N-terminus, the 707-residue chain is MSNFGVIKRDGSRAEFEIQRIINAIKKAASAVNISDEFYCHQIGQEVGNEIFTRHQGEIDINQIQKIVEDKLMASRYPEVARAYIEYRHDRDLAREKRSQLTKEIEGLIEQSNVELLNENANKDAKVIPTQRDLLAGIVAKHYAKHNILPRDVVEAHEKGEIHYHDLDYAPFFPMFNCMLVDLEGMLSRGFKMGNAEIEPPKSIGTATAVTAQIIAQVASHIYGGTTINRIDEVLSPYVQISYEKHLKHAQEWNVPDVEGYAKALIEKECFDAFQSLEYEVNTLHTSNGQTPFVTFGFGLGTSWQSRLIQQAILKNRIRGLGKNHKTPVFPKLVFTIKKGLNQNKGDPNYDIKQLALECASKRMYPDILNYDQVVKVTGSFKAPMGCRSFLGAYEEKGHEIHDGRNNLGVVSLNLPRIALESKNEEDFYRTLDERLAIAKKALMTRIARLENTKARVAPILYMEGACGVRLKADENVAQIFKNGRASISLGYIGIHETINALYNKGHIFDDEQLREKGIAIVRHLSEAVKRWQKETGYAFSLYSTPSENLCDRFCRLDTKKFGVIEGVTDKGYYTNSYHLDVEKKVNPYDKLDFEMTYPPLASGGFICYGEYPNIQHNLKALEDVWDYSYDRVPYYGTNTPIDECYECGFTGEFECTSKGFVCPKCGNHDSTKVSVTRRVCGYLGSPDARPFNAGKQEEVKRRVKHL.

One can recognise an ATP-cone domain in the interval 4 to 95 (FGVIKRDGSR…EYRHDRDLAR (92 aa)). In terms of domain architecture, Glycine radical spans 584-707 (KKVNPYDKLD…EEVKRRVKHL (124 aa)). Zn(2+) is bound by residues Cys645, Cys648, Cys663, and Cys666. Gly682 carries the post-translational modification Glycine radical.

Belongs to the anaerobic ribonucleoside-triphosphate reductase family. As to quaternary structure, forms a tetramer composed of two NrdD and two NrdG subunits.

The enzyme catalyses a ribonucleoside 5'-triphosphate + formate + H(+) = a 2'-deoxyribonucleoside 5'-triphosphate + CO2 + H2O. Activated under anaerobic conditions by NrdG, a tightly associated activase. Activation involves the formation of a glycyl radical at Gly-682. Its function is as follows. Catalyzes the conversion of ribonucleotides into deoxyribonucleotides, which are required for DNA synthesis and repair. The chain is Anaerobic ribonucleoside-triphosphate reductase (nrdD) from Haemophilus influenzae (strain ATCC 51907 / DSM 11121 / KW20 / Rd).